The chain runs to 163 residues: Nucleotide-binding protein Ava_2001 (163 aa).

The protein belongs to the YajQ family.

Its function is as follows. Nucleotide-binding protein. The polypeptide is Nucleotide-binding protein Ava_2001 (Trichormus variabilis (strain ATCC 29413 / PCC 7937) (Anabaena variabilis)).